The following is a 120-amino-acid chain: Large ribosomal subunit protein bL21 (120 aa).

This sequence belongs to the bacterial ribosomal protein bL21 family. In terms of assembly, part of the 50S ribosomal subunit. Contacts protein L20.

Its function is as follows. This protein binds to 23S rRNA in the presence of protein L20. The chain is Large ribosomal subunit protein bL21 from Roseiflexus castenholzii (strain DSM 13941 / HLO8).